Reading from the N-terminus, the 1285-residue chain is Dermonecrotic toxin (1285 aa).

The chain crosses the membrane as a helical span at residues 402–422 (MLVPAVGIPINFALSATALGL).

The protein localises to the cytoplasm. Its subcellular location is the secreted. The protein resides in the host membrane. Its function is as follows. This is a dermonecrotic toxin. This osteolytic toxin, induces bone resorption. Potent mitogen. This toxin is associated with the severe progressive form of the atrophic rhinitis, a major respiratory disease in pigs. The chain is Dermonecrotic toxin (toxA) from Pasteurella multocida.